A 318-amino-acid chain; its full sequence is NADH-ubiquinone oxidoreductase chain 1 (318 aa).

The next 8 helical transmembrane spans lie at 2 to 22 (FLINVLTVTLPILPAVAFLTL), 69 to 89 (FLFTVAPILALTLALTVWAPL), 102 to 122 (LLFILAMSSLMVYSILWSGWA), 146 to 166 (MTTITLSMVLMNGSFTLTAFA), 171 to 191 (HLWLIFPMWPLMMMWFTSTLA), 222 to 242 (LFFMAEYANIIMMNALTVILF), 253 to 273 (EISTINFVMKTIILTICFLWV), and 294 to 314 (LPLTLALCMWHISILISLACI).

The protein belongs to the complex I subunit 1 family. Core subunit of respiratory chain NADH dehydrogenase (Complex I) which is composed of 45 different subunits.

The protein localises to the mitochondrion inner membrane. The enzyme catalyses a ubiquinone + NADH + 5 H(+)(in) = a ubiquinol + NAD(+) + 4 H(+)(out). Core subunit of the mitochondrial membrane respiratory chain NADH dehydrogenase (Complex I) which catalyzes electron transfer from NADH through the respiratory chain, using ubiquinone as an electron acceptor. Essential for the catalytic activity and assembly of complex I. This chain is NADH-ubiquinone oxidoreductase chain 1 (MT-ND1), found in Elephas maximus (Indian elephant).